The following is a 598-amino-acid chain: UvrABC system protein C (598 aa).

The GIY-YIG domain maps to 11–91; the sequence is QKPGVYIMHN…IKKYRPHYNI (81 aa). One can recognise a UVR domain in the interval 195–230; sequence KTTIKKLKKDMNRYAKNMEFEKAAMLRDQIDTIKIT.

This sequence belongs to the UvrC family. Interacts with UvrB in an incision complex.

Its subcellular location is the cytoplasm. The UvrABC repair system catalyzes the recognition and processing of DNA lesions. UvrC both incises the 5' and 3' sides of the lesion. The N-terminal half is responsible for the 3' incision and the C-terminal half is responsible for the 5' incision. The polypeptide is UvrABC system protein C (Methanosphaera stadtmanae (strain ATCC 43021 / DSM 3091 / JCM 11832 / MCB-3)).